A 248-amino-acid chain; its full sequence is 3-deoxy-manno-octulosonate cytidylyltransferase (248 aa).

Belongs to the KdsB family.

The protein localises to the cytoplasm. It carries out the reaction 3-deoxy-alpha-D-manno-oct-2-ulosonate + CTP = CMP-3-deoxy-beta-D-manno-octulosonate + diphosphate. Its pathway is nucleotide-sugar biosynthesis; CMP-3-deoxy-D-manno-octulosonate biosynthesis; CMP-3-deoxy-D-manno-octulosonate from 3-deoxy-D-manno-octulosonate and CTP: step 1/1. It participates in bacterial outer membrane biogenesis; lipopolysaccharide biosynthesis. Its function is as follows. Activates KDO (a required 8-carbon sugar) for incorporation into bacterial lipopolysaccharide in Gram-negative bacteria. The protein is 3-deoxy-manno-octulosonate cytidylyltransferase of Desulfosudis oleivorans (strain DSM 6200 / JCM 39069 / Hxd3) (Desulfococcus oleovorans).